The following is a 59-amino-acid chain: Single-pass membrane and coiled-coil domain-containing protein 4 (59 aa).

Residues 1–27 (MRQLKGKPKKETSRDKKERKQAMQEAR) form a disordered region. Positions 9–27 (KKETSRDKKERKQAMQEAR) are enriched in basic and acidic residues. Residues 9–31 (KKETSRDKKERKQAMQEARRQIT) adopt a coiled-coil conformation. Residues 32-52 (TVVLPTLAVVVLLIVVFVYVA) traverse the membrane as a helical segment.

It belongs to the SMCO4 family.

Its subcellular location is the membrane. The polypeptide is Single-pass membrane and coiled-coil domain-containing protein 4 (SMCO4) (Bos taurus (Bovine)).